Consider the following 412-residue polypeptide: tRNA N6-adenosine threonylcarbamoyltransferase, mitochondrial (412 aa).

Residues Met-1–Ile-78 constitute a mitochondrion transit peptide. Positions 157 and 161 each coordinate a divalent metal cation. Substrate-binding positions include Leu-179 to Gly-183, Asp-212, Ala-228, Glu-232, Arg-328 to Asn-329, and Ser-363. Asp-364 is an a divalent metal cation binding site.

It belongs to the KAE1 / TsaD family. In terms of assembly, homodimer. The cofactor is a divalent metal cation.

The protein resides in the mitochondrion. It catalyses the reaction L-threonylcarbamoyladenylate + adenosine(37) in tRNA = N(6)-L-threonylcarbamoyladenosine(37) in tRNA + AMP + H(+). Its function is as follows. Required for the formation of a threonylcarbamoyl group on adenosine at position 37 (t(6)A37) in mitochondrial tRNAs that read codons beginning with adenine. Probably involved in the transfer of the threonylcarbamoyl moiety of threonylcarbamoyl-AMP (TC-AMP) to the N6 group of A37. Involved in mitochondrial genome maintenance. The sequence is that of tRNA N6-adenosine threonylcarbamoyltransferase, mitochondrial (pgp1) from Schizosaccharomyces pombe (strain 972 / ATCC 24843) (Fission yeast).